The following is a 198-amino-acid chain: SCO2-like protein RF_0043 (198 aa).

This sequence belongs to the SCO1/2 family.

This chain is SCO2-like protein RF_0043, found in Rickettsia felis (strain ATCC VR-1525 / URRWXCal2) (Rickettsia azadi).